A 233-amino-acid polypeptide reads, in one-letter code: Purine nucleoside phosphorylase DeoD-type (233 aa).

Residue H4 coordinates a purine D-ribonucleoside. Phosphate contacts are provided by residues G20, R24, R43, and 87–90 (RVGT). Residues 179–181 (EME) and 203–204 (SD) each bind a purine D-ribonucleoside. Catalysis depends on D204, which acts as the Proton donor.

The protein belongs to the PNP/UDP phosphorylase family. In terms of assembly, homohexamer; trimer of homodimers.

It catalyses the reaction a purine D-ribonucleoside + phosphate = a purine nucleobase + alpha-D-ribose 1-phosphate. It carries out the reaction a purine 2'-deoxy-D-ribonucleoside + phosphate = a purine nucleobase + 2-deoxy-alpha-D-ribose 1-phosphate. Its function is as follows. Catalyzes the reversible phosphorolytic breakdown of the N-glycosidic bond in the beta-(deoxy)ribonucleoside molecules, with the formation of the corresponding free purine bases and pentose-1-phosphate. This is Purine nucleoside phosphorylase DeoD-type from Clostridium novyi (strain NT).